The sequence spans 115 residues: uncharacterized protein (115 aa).

Positions 9–30 (EGLRERGASGKNEQKKKKKEKI) are disordered.

This is an uncharacterized protein from Saccharomyces cerevisiae (strain ATCC 204508 / S288c) (Baker's yeast).